Here is a 1537-residue protein sequence, read N- to C-terminus: Adhesion G protein-coupled receptor L3 (1537 aa).

The signal sequence occupies residues 1 to 19 (MWPPQLLILTMLLAPVVHG). Over 20–943 (GKHNERHPAL…VKHSDAVHDL (924 aa)) the chain is Extracellular. The tract at residues 53-80 (PAAERSTAHRGQGPRGAARGVRGPGAPG) is disordered. In terms of domain architecture, SUEL-type lectin spans 103 to 192 (SCESYPIELR…KYLEVQYECV (90 aa)). 5 cysteine pairs are disulfide-bonded: cysteine 104-cysteine 134, cysteine 113-cysteine 191, cysteine 146-cysteine 178, cysteine 159-cysteine 165, and cysteine 203-cysteine 385. N-linked (GlcNAc...) asparagine glycosylation occurs at asparagine 161. Positions 202-461 (LCPGLLKGVY…VVKYSLDFGP (260 aa)) constitute an Olfactomedin-like domain. Positions 317-347 (YHDTSPYRWGGKSDIDLAVDENGLWVIYATE) are interaction with FLRT3. Residues aspartate 332, asparagine 380, alanine 381, and valine 435 each coordinate Ca(2+). The tract at residues 521 to 540 (RSTTASLPGRRNRSTSTPSP) is disordered. Asparagine 532, asparagine 617, asparagine 827, asparagine 840, asparagine 885, and asparagine 911 each carry an N-linked (GlcNAc...) asparagine glycan. Residues 756-935 (DIVRENTDNI…AVLMAHVEVK (180 aa)) form the GAIN-B domain. 2 disulfides stabilise this stretch: cysteine 886-cysteine 917 and cysteine 905-cysteine 919. Positions 886 to 935 (CSFWSYSKRTMTGYWSTQGCRLLTTNKTHTTCSCNHLTNFAVLMAHVEVK) are GPS. A stachel region spans residues 923–939 (TNFAVLMAHVEVKHSDA). Residues 944 to 969 (LLDVITWVGILLSLVCLLICIFTFCF) traverse the membrane as a helical segment. Topologically, residues 970 to 975 (FRGLQS) are cytoplasmic. The helical transmembrane segment at 976 to 999 (DRNTIHKNLCISLFVAELLFLIGI) threads the bilayer. The N-linked (GlcNAc...) asparagine glycan is linked to asparagine 1000. Topologically, residues 1000-1006 (NRTDQPI) are extracellular. The helical transmembrane segment at 1007 to 1034 (ACAVFAALLHFFFLAAFTWMFLEGVQLY) threads the bilayer. Cysteine 1008 and cysteine 1080 are disulfide-bonded. Over 1035–1048 (IMLVEVFESEHSRR) the chain is Cytoplasmic. Residues 1049 to 1071 (KYFYLVGYGMPALIVAVSAAVDY) traverse the membrane as a helical segment. Over 1072–1086 (RSYGTDKVCWLRLDT) the chain is Extracellular. The chain crosses the membrane as a helical span at residues 1087–1112 (YFIWSFIGPATLIIMLNVIFLGIALY). The Cytoplasmic segment spans residues 1113–1142 (KMFHHTAILKPESGCLDNINYEDNRPFIKS). Residues 1143–1163 (WVIGAIALLCLLGLTWAFGLM) form a helical membrane-spanning segment. Over 1164–1168 (YINES) the chain is Extracellular. The N-linked (GlcNAc...) asparagine glycan is linked to asparagine 1166. A helical transmembrane segment spans residues 1169-1195 (TVIMAYLFTIFNSLQGMFIFIFHCVLQ). Residues 1196-1537 (KKVRKEYGKC…KGPAHLVTSL (342 aa)) lie on the Cytoplasmic side of the membrane. The tract at residues 1213-1237 (GKSTESSIGSGKTSGSRTPGRYSTG) is disordered. 2 positions are modified to phosphoserine: serine 1254 and serine 1522. Residues 1512 to 1537 (FIVPPNKDGASPEGTSKGPAHLVTSL) form a disordered region. Residues 1532 to 1537 (HLVTSL) carry the PDZ-binding motif.

Belongs to the G-protein coupled receptor 2 family. LN-TM7 subfamily. In terms of assembly, heterodimer of 2 chains generated by proteolytic processing; the large extracellular N-terminal fragment and the membrane-bound C-terminal fragment predominantly remain associated and non-covalently linked. Interacts (via olfactomedin-like domain) with FLRT1 (via extracellular domain). Interacts (via olfactomedin-like domain) with FLRT2 (via extracellular domain). Interacts (via olfactomedin-like domain) with FLRT3 (via extracellular domain); the interaction is direct. Interacts (via extracellular domain) with TENM1. Interacts (via extracellular domain) with TENM2. Interacts (via extracellular domain) with TENM3. Identified in a complex with FLRT3 and UNC5B; does not interact with UNC5B by itself. Identified in a complex with FLRT3 and UNC5D; does not interact with UNC5D by itself. As to quaternary structure, interacts (via PDZ-binding motif) with SHANK3. Interacts (via PDZ-binding motif) with DLG4. Autoproteolytically processed at the GPS region of the GAIN-B domain; this cleavage modulates receptor activity. Post-translationally, O-glycosylated (major) and N-glycosylated. As to expression, localizes to postsynaptic spines in non-overlapping dendritic domains of CA1-region pyramidal neurons: specifically localizes to excitatory synapses in the S.oriens and S.radiatum, corresponding to distinct presynaptic inputs onto CA1-region pyramidal neurons.

The protein resides in the cell membrane. It localises to the postsynaptic cell membrane. It is found in the cell projection. The protein localises to the axon. Its subcellular location is the cell junction. Its activity is regulated as follows. Forms a heterodimer of 2 chains generated by proteolytic processing that remain associated through non-covalent interactions mediated by the GAIN-B domain. In the inactivated receptor, the Stachel sequence (also named stalk) is embedded in the GAIN-B domain, where it adopts a beta-strand conformation. On activation, the Stachel moves into the 7 transmembrane region and adopts a twisted hook-shaped configuration that forms contacts within the receptor, leading to coupling of a G-alpha protein, which activates signaling. The cleaved GAIN-B and N-terminal domains can then dissociate from the rest of the receptor. In terms of biological role, orphan adhesion G-protein coupled receptor (aGPCR), which mediates synapse specificity. Ligand binding causes a conformation change that triggers signaling via guanine nucleotide-binding proteins (G proteins) and modulates the activity of downstream effectors. ADGRL3 is coupled with different classes of G alpha proteins, such as G(12)/G(13), G(s), G(i) or G(q), depending on the context. Coupling to G(12)/G(13) G proteins, which mediates the activation Rho small GTPases is the most efficient. Following G-protein coupled receptor activation, associates with cell adhesion molecules that are expressed at the surface of adjacent cells to direct synapse specificity. Specifically mediates the establishment of Schaffer-collateral synapses formed by CA3-region axons on CA1-region pyramidal neurons in the hippocampus. Localizes to postsynaptic spines in excitatory synapses in the S.oriens and S.radiatum and interacts with presynaptic cell adhesion molecules FLRT3 and TENM2, promoting synapse formation. Plays a role in the development of glutamatergic synapses in the cortex. Important in determining the connectivity rates between the principal neurons in the cortex. Orphan adhesion G-protein coupled receptor (aGPCR), which mediates synapse specificity. Ligand binding causes a conformation change that triggers signaling via guanine nucleotide-binding proteins (G proteins) and modulates the activity of downstream effectors, such as adenylate cyclase. Isoform 1 is specifically coupled to G(s) G proteins and mediates activation of adenylate cyclase activity. Following G-protein coupled receptor activation, undergoes liquid-liquid phase transition, associates with (1) cell adhesion molecules that are expressed at the surface of adjacent cells, as well as (2) PDZ-containing proteins, such as SHANK3 and DLG4, in the cytoplasm to direct synapse formation. Functionally, orphan adhesion G-protein coupled receptor (aGPCR). Ligand binding causes a conformation change that triggers signaling via guanine nucleotide-binding proteins (G proteins) and modulates the activity of downstream effectors, such as RhoA pathway. Isoform 7 is coupled to G(12) and/or G(13) G proteins (GNA12 and GNA13, respectively) and mediates the activation Rho small GTPases. In Mus musculus (Mouse), this protein is Adhesion G protein-coupled receptor L3.